The chain runs to 341 residues: S-adenosylmethionine:tRNA ribosyltransferase-isomerase (341 aa).

This sequence belongs to the QueA family. Monomer.

The protein resides in the cytoplasm. The enzyme catalyses 7-aminomethyl-7-carbaguanosine(34) in tRNA + S-adenosyl-L-methionine = epoxyqueuosine(34) in tRNA + adenine + L-methionine + 2 H(+). It functions in the pathway tRNA modification; tRNA-queuosine biosynthesis. Functionally, transfers and isomerizes the ribose moiety from AdoMet to the 7-aminomethyl group of 7-deazaguanine (preQ1-tRNA) to give epoxyqueuosine (oQ-tRNA). The protein is S-adenosylmethionine:tRNA ribosyltransferase-isomerase of Pelotomaculum thermopropionicum (strain DSM 13744 / JCM 10971 / SI).